A 42-amino-acid chain; its full sequence is Photosystem II reaction center protein J (42 aa).

The chain crosses the membrane as a helical span at residues 10–30; that stretch reads IPLWLIGTVVGSLAIGLLAIF.

Belongs to the PsbJ family. As to quaternary structure, PSII is composed of 1 copy each of membrane proteins PsbA, PsbB, PsbC, PsbD, PsbE, PsbF, PsbH, PsbI, PsbJ, PsbK, PsbL, PsbM, PsbT, PsbX, PsbY, PsbZ, Psb30/Ycf12, at least 3 peripheral proteins of the oxygen-evolving complex and a large number of cofactors. It forms dimeric complexes.

Its subcellular location is the plastid. It is found in the chloroplast thylakoid membrane. Its function is as follows. One of the components of the core complex of photosystem II (PSII). PSII is a light-driven water:plastoquinone oxidoreductase that uses light energy to abstract electrons from H(2)O, generating O(2) and a proton gradient subsequently used for ATP formation. It consists of a core antenna complex that captures photons, and an electron transfer chain that converts photonic excitation into a charge separation. The protein is Photosystem II reaction center protein J of Stigeoclonium helveticum (Green alga).